Consider the following 136-residue polypeptide: MLSNPKRTRFRKQHRGRMKGISYRGNHICFGRYALQALEPAWITSRQIEAGRRAMTRNVRRGGKIWVRIFPDKPVTLRPTETRMGSGKGSPEYWVAVVKPGRILYEMSGVAENIARKAISIAASKMPIRTQFIISG.

This sequence belongs to the universal ribosomal protein uL16 family. In terms of assembly, part of the 50S ribosomal subunit.

It localises to the plastid. It is found in the chloroplast. The sequence is that of Large ribosomal subunit protein uL16c from Citrus sinensis (Sweet orange).